Here is an 88-residue protein sequence, read N- to C-terminus: MLEPSPYQDHKTWKMTPAMIRARQPFFKKNLMGLVILLGVTGTIYTYTYKMLNKDSDFADVPIPPIDEKELEQLKKEYELEKIRRAQK.

The Mitochondrial matrix portion of the chain corresponds to 1-30 (MLEPSPYQDHKTWKMTPAMIRARQPFFKKN). Residues 31 to 49 (LMGLVILLGVTGTIYTYTY) traverse the membrane as a helical segment. Topologically, residues 50 to 88 (KMLNKDSDFADVPIPPIDEKELEQLKKEYELEKIRRAQK) are mitochondrial intermembrane.

This sequence belongs to the COA3 family. As to quaternary structure, component of 250-400 kDa complexes called cytochrome oxidase assembly intermediates or COA complexes.

It localises to the mitochondrion inner membrane. Its function is as follows. Required for assembly of cytochrome c oxidase (complex IV). In Kluyveromyces lactis (strain ATCC 8585 / CBS 2359 / DSM 70799 / NBRC 1267 / NRRL Y-1140 / WM37) (Yeast), this protein is Cytochrome c oxidase assembly factor 3, mitochondrial (COA3).